The sequence spans 325 residues: Undecaprenyl-phosphate 4-deoxy-4-formamido-L-arabinose transferase (325 aa).

Transmembrane regions (helical) follow at residues 234–254 (LLSV…LLLI) and 269–289 (VFML…GMGL).

Belongs to the glycosyltransferase 2 family.

The protein resides in the cell inner membrane. It catalyses the reaction UDP-4-deoxy-4-formamido-beta-L-arabinose + di-trans,octa-cis-undecaprenyl phosphate = 4-deoxy-4-formamido-alpha-L-arabinopyranosyl di-trans,octa-cis-undecaprenyl phosphate + UDP. Its pathway is glycolipid biosynthesis; 4-amino-4-deoxy-alpha-L-arabinose undecaprenyl phosphate biosynthesis; 4-amino-4-deoxy-alpha-L-arabinose undecaprenyl phosphate from UDP-4-deoxy-4-formamido-beta-L-arabinose and undecaprenyl phosphate: step 1/2. It functions in the pathway bacterial outer membrane biogenesis; lipopolysaccharide biosynthesis. Functionally, catalyzes the transfer of 4-deoxy-4-formamido-L-arabinose from UDP to undecaprenyl phosphate. The modified arabinose is attached to lipid A and is required for resistance to polymyxin and cationic antimicrobial peptides. The polypeptide is Undecaprenyl-phosphate 4-deoxy-4-formamido-L-arabinose transferase (Erwinia tasmaniensis (strain DSM 17950 / CFBP 7177 / CIP 109463 / NCPPB 4357 / Et1/99)).